Reading from the N-terminus, the 447-residue chain is Dihydroorotase (447 aa).

2 residues coordinate Zn(2+): histidine 84 and histidine 86. Substrate contacts are provided by residues histidine 86–arginine 88 and asparagine 118. Residues aspartate 174, histidine 201, and histidine 255 each contribute to the Zn(2+) site. Asparagine 301 contributes to the substrate binding site. Aspartate 328 contributes to the Zn(2+) binding site. The active site involves aspartate 328. Residues histidine 332 and phenylalanine 346–glycine 347 contribute to the substrate site.

Belongs to the metallo-dependent hydrolases superfamily. DHOase family. Class I DHOase subfamily. Requires Zn(2+) as cofactor.

It carries out the reaction (S)-dihydroorotate + H2O = N-carbamoyl-L-aspartate + H(+). The protein operates within pyrimidine metabolism; UMP biosynthesis via de novo pathway; (S)-dihydroorotate from bicarbonate: step 3/3. Its function is as follows. Catalyzes the reversible cyclization of carbamoyl aspartate to dihydroorotate. The polypeptide is Dihydroorotase (Anaplasma phagocytophilum (strain HZ)).